A 527-amino-acid polypeptide reads, in one-letter code: MKKLLAMFFCLTVVVNAPLAMAEDAKTTEKTTDVVLIGGGIMSSTLGVYLQELQPDWSIDMVERMDNVAEESSNGWNNAGTGHSAFMELNYTPDNPDGPINISKALEITEAFEVSRQFWSYQVKNGVLNNPHSFINSVPHISFVWGDENTAFLKHRYDAMQHSTLYRGMEFSDDPNTIKEWAPLVMEGRDPAQKIAATRMPIGTDVNYGEITRQLVDAMKTKSNFALHLNSEVRDIKRNADNTWSVTYADLKNGEKESVIKAKFVFIGAGGAALQLLQKTGIPEADLYGGFPVGGEFLVTENPEIVKRHMAKVYGKASVGAPPMSVPHLDTRIFDGKPVLLFGPFATFSSKFLKNGSLWDLIGSVTFSNVMPMTHVGLDNFDLVKYLIGQVMMDDDDRFASLKEYFPNAKKEDWRLTVAGQRVQIIKKDDDKGGVLKLGTEIVSSQDGSIAALLGASPGASTAAPIMLSLLEKVFKDKVATPEWQSKLKEIVPSYGQKLDGNIEMTNKIRSYTSSTLGLDYIEVKPE.

It belongs to the MQO family. FAD is required as a cofactor.

It carries out the reaction (S)-malate + a quinone = a quinol + oxaloacetate. It participates in carbohydrate metabolism; tricarboxylic acid cycle; oxaloacetate from (S)-malate (quinone route): step 1/1. This chain is Probable malate:quinone oxidoreductase, found in Pectobacterium carotovorum subsp. carotovorum (strain PC1).